Consider the following 632-residue polypeptide: Golgin subfamily A member 8M (632 aa).

The tract at residues 1 to 77 (MAEETQHNKL…SSATLKDLES (77 aa)) is disordered. The segment covering 38–50 (TNGSIPQTATSGG) has biased composition (polar residues). 2 coiled-coil regions span residues 86-154 (LDSR…HMKR) and 209-421 (KLEQ…SLMA). The span at 352–362 (KQEERIQEQHK) shows a compositional bias: basic and acidic residues. Disordered stretches follow at residues 352-384 (KQEE…NKST), 422-456 (LPGE…REAM), and 505-524 (DAAL…DEGE). A compositionally biased stretch (gly residues) spans 508–520 (LGGGHHQAGAQGG).

The protein belongs to the GOLGA8 family.

This is Golgin subfamily A member 8M from Homo sapiens (Human).